The following is a 426-amino-acid chain: MLTNGLISLLAIAGLATNAFAGPIRKVSNAGAAGAIADKYIVVLKKGLSDSAVSKHTNRISSFHSNVARDLTGARAHGVGRKFRFSSTGFNGYVGGFDKATLQEILNSPEVDYVEQDTVVTTYAEQTDSTWGLDRISHEDYSAPYTYEYDETAAGAGTTVYVIDTGIRISHDEFQTVNGSSRATWGFNSVDKTDSDGNGHGTHCAGTIAGKTYGVSKKAKVVAVKVLSAGGSGSTAGVVSGMNWVAENATPNFSVASMSLGGSKSTALNAAVDCIFNAGITIVVAAGNENQDAKNVSPASAPNAITVGAIDSSNKIASLSNWGTLIDVFAPGVGVLSSWATSDKETKTISGTSMACPHVAGLAAYYISASEGGADPATITDKITSSRRQWSGHREHPWLPKQDRLQRICLSTHSPKTNHQVTIVAS.

The signal sequence occupies residues Met-1–Ala-21. Residues Gly-22–Tyr-123 constitute a propeptide that is removed on maturation. Positions Lys-39 to Thr-122 constitute an Inhibitor I9 domain. In terms of domain architecture, Peptidase S8 spans Thr-130–Ser-426. Asp-164 functions as the Charge relay system in the catalytic mechanism. N-linked (GlcNAc...) asparagine glycosylation is present at Asn-178. Residue His-200 is the Charge relay system of the active site. Asn-252 is a glycosylation site (N-linked (GlcNAc...) asparagine). Ser-353 (charge relay system) is an active-site residue.

This sequence belongs to the peptidase S8 family.

It is found in the secreted. Inhibited by PMSF, SSI, the peptide Phe-Val and by Phe, but not by EDTA. Its function is as follows. Hydrolyzes gelatin, casein, the chromogenic substrate azocoll and the cuticle of the nematode P.redivivus. Immobilizes P.redivivus. The polypeptide is Cuticle-degrading serine protease (Orbilia oligospora (Nematode-trapping fungus)).